The sequence spans 142 residues: Putative pre-16S rRNA nuclease (142 aa).

Belongs to the YqgF nuclease family.

The protein resides in the cytoplasm. Its function is as follows. Could be a nuclease involved in processing of the 5'-end of pre-16S rRNA. This chain is Putative pre-16S rRNA nuclease, found in Staphylococcus aureus (strain JH1).